The primary structure comprises 321 residues: Beta-ketoacyl-[acyl-carrier-protein] synthase III (321 aa).

Residues C113 and H246 contribute to the active site. The interval 247-251 is ACP-binding; that stretch reads QANVR. Residue N276 is part of the active site.

Belongs to the thiolase-like superfamily. FabH family. Homodimer.

It is found in the cytoplasm. The enzyme catalyses malonyl-[ACP] + acetyl-CoA + H(+) = 3-oxobutanoyl-[ACP] + CO2 + CoA. The protein operates within lipid metabolism; fatty acid biosynthesis. In terms of biological role, catalyzes the condensation reaction of fatty acid synthesis by the addition to an acyl acceptor of two carbons from malonyl-ACP. Catalyzes the first condensation reaction which initiates fatty acid synthesis and may therefore play a role in governing the total rate of fatty acid production. Possesses both acetoacetyl-ACP synthase and acetyl transacylase activities. Its substrate specificity determines the biosynthesis of branched-chain and/or straight-chain of fatty acids. This chain is Beta-ketoacyl-[acyl-carrier-protein] synthase III, found in Enterococcus faecalis (strain ATCC 700802 / V583).